The following is a 200-amino-acid chain: Large ribosomal subunit protein uL4 (200 aa).

Residues 38–80 (GRQGSKQQKTRSDVSGGGKRPWRQKGTGRARAGTTRGPIWRGG) form a disordered region.

It belongs to the universal ribosomal protein uL4 family. Part of the 50S ribosomal subunit.

Functionally, one of the primary rRNA binding proteins, this protein initially binds near the 5'-end of the 23S rRNA. It is important during the early stages of 50S assembly. It makes multiple contacts with different domains of the 23S rRNA in the assembled 50S subunit and ribosome. Its function is as follows. Forms part of the polypeptide exit tunnel. The protein is Large ribosomal subunit protein uL4 of Stutzerimonas stutzeri (strain A1501) (Pseudomonas stutzeri).